A 156-amino-acid polypeptide reads, in one-letter code: Small ribosomal subunit protein uS7 (156 aa).

This sequence belongs to the universal ribosomal protein uS7 family. Part of the 30S ribosomal subunit. Contacts proteins S9 and S11.

Functionally, one of the primary rRNA binding proteins, it binds directly to 16S rRNA where it nucleates assembly of the head domain of the 30S subunit. Is located at the subunit interface close to the decoding center, probably blocks exit of the E-site tRNA. The polypeptide is Small ribosomal subunit protein uS7 (Geobacter sulfurreducens (strain ATCC 51573 / DSM 12127 / PCA)).